We begin with the raw amino-acid sequence, 208 residues long: Large ribosomal subunit protein bL25 (208 aa).

It belongs to the bacterial ribosomal protein bL25 family. CTC subfamily. Part of the 50S ribosomal subunit; part of the 5S rRNA/L5/L18/L25 subcomplex. Contacts the 5S rRNA. Binds to the 5S rRNA independently of L5 and L18.

Its function is as follows. This is one of the proteins that binds to the 5S RNA in the ribosome where it forms part of the central protuberance. In Bartonella quintana (strain Toulouse) (Rochalimaea quintana), this protein is Large ribosomal subunit protein bL25.